The sequence spans 509 residues: Mitogen-activated protein kinase sma-5 (509 aa).

The disordered stretch occupies residues 19-72; sequence DPITSMSPPQENRSPKAEYLNNFFNTNPTNGKSRGSQEAPRKPLGQTNLNVQGS. Polar residues-rich tracts occupy residues 20-30 and 40-54; these read PITSMSPPQEN and NFFNTNPTNGKSRGS. The Protein kinase domain maps to 105 to 411; sequence YEPTQNIGSG…IQDALLHPYI (307 aa). ATP contacts are provided by residues 111-119 and K134; that span reads IGSGAFGIV. Residue D231 is the Proton acceptor of the active site. The disordered stretch occupies residues 460–482; that stretch reads YSELHSGDSTGSTSDMSTNTSGE. The span at 466 to 481 shows a compositional bias: low complexity; it reads GDSTGSTSDMSTNTSG.

It belongs to the protein kinase superfamily. CMGC Ser/Thr protein kinase family. MAP kinase subfamily. Mg(2+) is required as a cofactor. As to expression, expressed in intestine with a stronger expression in the four most anterior cells, muscles, excretory cell, pharynx and, to a lesser extent, in hypodermis.

The catalysed reaction is L-seryl-[protein] + ATP = O-phospho-L-seryl-[protein] + ADP + H(+). The enzyme catalyses L-threonyl-[protein] + ATP = O-phospho-L-threonyl-[protein] + ADP + H(+). Serine/threonine-protein kinase involved in the postembryonic regulation of body size, mainly through control of cell growth. In particular, controls the volume of intestine, muscles and hypodermis. In addition, regulates growth, intestinal granule distribution, lifespan and number of offspring. In Caenorhabditis elegans, this protein is Mitogen-activated protein kinase sma-5.